Reading from the N-terminus, the 1938-residue chain is Myosin-13 (1938 aa).

The 50-residue stretch at 33 to 82 (DSKKACFVADNKEMYVKGMIQTRENDKVIVKTLDDRMLTLNNDQVFPMNP) folds into the Myosin N-terminal SH3-like domain. The region spanning 86–782 (DKIEDMAMMT…LLGLLEEMRD (697 aa)) is the Myosin motor domain. N6,N6,N6-trimethyllysine is present on lysine 130. 179–186 (GESGAGKT) provides a ligand contact to ATP. Actin-binding regions lie at residues 659-681 (LNKL…IPNE) and 761-775 (RFGN…GLLG). The IQ domain maps to 785–814 (LVTLMTSTQAVCRGYLMRVEFKKMMERRDS). Positions 843–1938 (LLKSAEAEKE…RDVGSQKMEE (1096 aa)) form a coiled coil. A disordered region spans residues 1917–1938 (AESQVNKLRAKSRDVGSQKMEE). The segment covering 1927-1938 (KSRDVGSQKMEE) has biased composition (basic and acidic residues).

Belongs to the TRAFAC class myosin-kinesin ATPase superfamily. Myosin family. As to quaternary structure, muscle myosin is a hexameric protein that consists of 2 heavy chain subunits (MHC), 2 alkali light chain subunits (MLC) and 2 regulatory light chain subunits (MLC-2). As to expression, specifically expressed in extraocular and laryngeal muscles.

It localises to the cytoplasm. It is found in the myofibril. Functionally, fast twitching myosin mediating the high-velocity and low-tension contractions of specific striated muscles. The sequence is that of Myosin-13 (MYH13) from Homo sapiens (Human).